A 113-amino-acid chain; its full sequence is Hydrogenase maturation factor HypA (113 aa).

Residue His2 coordinates Ni(2+). Zn(2+) contacts are provided by Cys73, Cys76, Cys89, and Cys92.

Belongs to the HypA/HybF family.

In terms of biological role, involved in the maturation of [NiFe] hydrogenases. Required for nickel insertion into the metal center of the hydrogenase. This chain is Hydrogenase maturation factor HypA, found in Chlorobaculum tepidum (strain ATCC 49652 / DSM 12025 / NBRC 103806 / TLS) (Chlorobium tepidum).